Here is an 87-residue protein sequence, read N- to C-terminus: Defensin alpha-like protein 1 (87 aa).

The N-terminal stretch at methionine 1–alanine 19 is a signal peptide. Residues aspartate 20–aspartate 56 constitute a propeptide that is removed on maturation. The span at glutamine 23–aspartate 41 shows a compositional bias: acidic residues. The disordered stretch occupies residues glutamine 23–serine 43.

The protein belongs to the alpha-defensin family. Antiparallel homodimer; disulfide-linked. In terms of tissue distribution, specifically expressed in small intestine (jejunum and ileum). Probably expressed by Paneth cells at the base of intestinal crypts. Coexpressed with MMP7 in small intestine.

It localises to the secreted. Intestinal defense peptide. Has potent antibacterial activity against Gram-negative bacteria E.coli O157:H7, S.typhimurium DT104, and K.pneumoniae; and against Gram-positive bacteria S.aureus, methicillin-resistant S.aureus and L.monocytogenes. Remains active in the presence of NaCl and Mg(2+). Probably functions by disrupting bacterial membrane integrity. However, does not show cytotoxic activity towards human intestinal cells. This is Defensin alpha-like protein 1 from Rattus norvegicus (Rat).